A 96-amino-acid chain; its full sequence is Large ribosomal subunit protein uL23 (96 aa).

The protein belongs to the universal ribosomal protein uL23 family. As to quaternary structure, part of the 50S ribosomal subunit. Contacts protein L29, and trigger factor when it is bound to the ribosome.

One of the early assembly proteins it binds 23S rRNA. One of the proteins that surrounds the polypeptide exit tunnel on the outside of the ribosome. Forms the main docking site for trigger factor binding to the ribosome. The sequence is that of Large ribosomal subunit protein uL23 from Vesicomyosocius okutanii subsp. Calyptogena okutanii (strain HA).